The chain runs to 101 residues: Small ribosomal subunit protein bS18c (101 aa).

Positions 1–19 (MNKSKRPFTKSKRSFRRRL) are enriched in basic residues. Residues 1–23 (MNKSKRPFTKSKRSFRRRLPPIQ) are disordered.

Belongs to the bacterial ribosomal protein bS18 family. As to quaternary structure, part of the 30S ribosomal subunit.

The protein localises to the plastid. It is found in the chloroplast. The sequence is that of Small ribosomal subunit protein bS18c from Lobularia maritima (Sweet alyssum).